We begin with the raw amino-acid sequence, 461 residues long: tRNA modification GTPase MnmE (461 aa).

Positions 23, 88, and 127 each coordinate (6S)-5-formyl-5,6,7,8-tetrahydrofolate. The TrmE-type G domain maps to 223–383; the sequence is GLNTVIVGKP…LKECIKNLFF (161 aa). Asparagine 233 is a K(+) binding site. Residues 233–238, 252–258, and 277–280 contribute to the GTP site; these read NVGKSS, TEIPGTT, and DTAG. Serine 237 is a Mg(2+) binding site. Residues threonine 252, isoleucine 254, and threonine 257 each coordinate K(+). Threonine 258 lines the Mg(2+) pocket. Lysine 461 provides a ligand contact to (6S)-5-formyl-5,6,7,8-tetrahydrofolate.

This sequence belongs to the TRAFAC class TrmE-Era-EngA-EngB-Septin-like GTPase superfamily. TrmE GTPase family. Homodimer. Heterotetramer of two MnmE and two MnmG subunits. The cofactor is K(+).

It is found in the cytoplasm. Functionally, exhibits a very high intrinsic GTPase hydrolysis rate. Involved in the addition of a carboxymethylaminomethyl (cmnm) group at the wobble position (U34) of certain tRNAs, forming tRNA-cmnm(5)s(2)U34. This chain is tRNA modification GTPase MnmE, found in Clostridium botulinum (strain Langeland / NCTC 10281 / Type F).